Reading from the N-terminus, the 386-residue chain is Terpene cyclase 6 (386 aa).

Mg(2+)-binding residues include Asp-128, Asn-276, and Ser-280. Residues 128-132 (DDEID) carry the D(D/E)XX(D/E) motif motif. The NSE motif motif lies at 276 to 284 (NEILSLQKE). Positions 360 to 367 (WSYNCERY) match the WxxxxxRY motif motif. Arg-366 and Tyr-367 together coordinate (2E,6E)-farnesyl diphosphate.

It belongs to the terpene synthase family. As to quaternary structure, homodimer. Mg(2+) is required as a cofactor.

It catalyses the reaction (2E,6E)-farnesyl diphosphate + H2O = trichobrasilenol + diphosphate. The catalysed reaction is (2E,6E)-farnesyl diphosphate = alpha-humulene + diphosphate. It carries out the reaction (2E,6E)-farnesyl diphosphate = (-)-(E)-beta-caryophyllene + diphosphate. The enzyme catalyses (2E,6E)-farnesyl diphosphate = (E)-2-epi-beta-caryophyllene + diphosphate. It catalyses the reaction (2E,6E)-farnesyl diphosphate + H2O = (+)-isoafricanol + diphosphate. The catalysed reaction is (2E,6E)-farnesyl diphosphate + H2O = (+)-(2S,3R,9R)-pristinol + diphosphate. It carries out the reaction (2E,6E)-farnesyl diphosphate = african-3-ene + diphosphate. The enzyme catalyses (2E,6E)-farnesyl diphosphate = african-1-ene + diphosphate. It functions in the pathway sesquiterpene biosynthesis. Terpene cyclase that is able to convert FPP into a mixture of sesquiterpene hydrocarbons and alcohols. The main product is trichobrasilenol. Additionally, side products include alpha-humulene, caryophyllene, 2-epi-caryophyllene, african-3-ene, african-1-ene, isoafricanol and pristinol. Does not accept GPP, GGPP, and GFPP as substrates. The chain is Terpene cyclase 6 from Hypocrea atroviridis (Trichoderma atroviride).